A 248-amino-acid polypeptide reads, in one-letter code: MWLGVVTLFPEMFRAVTDFGVTGRAVNKGLLELQTWNPRDFTHDKHKTVDDRPYGGGPGMLMMVQPLRDAIHAAKAAAGDSAKVIYLSPQGRKLTQQGVEELAKSDSLILVCGRYEGVDERIIQTEVDEEWSIGDYVLSGGELPAMTLIDSVSRLVPGVLGKQASAEQDSFSDGLLDCPHYTRPETLDGLDVPAVLLSGNHEHIRRWRLQQSLGRTLLRRPELLENLALTDEQTKLLAQFVDSTNECG.

S-adenosyl-L-methionine is bound by residues Gly113 and 133–138 (IGDYVL).

Belongs to the RNA methyltransferase TrmD family. Homodimer.

It localises to the cytoplasm. The catalysed reaction is guanosine(37) in tRNA + S-adenosyl-L-methionine = N(1)-methylguanosine(37) in tRNA + S-adenosyl-L-homocysteine + H(+). Specifically methylates guanosine-37 in various tRNAs. The chain is tRNA (guanine-N(1)-)-methyltransferase from Shewanella woodyi (strain ATCC 51908 / MS32).